Consider the following 74-residue polypeptide: Protein krueppel (74 aa).

4 C2H2-type zinc fingers span residues 1–4 (ERTH), 10–32 (FECP…MRLH), 38–60 (YHCS…LRVH), and 66–74 (YACELCAAK).

It belongs to the krueppel C2H2-type zinc-finger protein family.

The protein localises to the nucleus. Functionally, krueppel is a gap class segmentation protein. The chain is Protein krueppel (Kr) from Apis mellifera (Honeybee).